Here is a 366-residue protein sequence, read N- to C-terminus: Aminomethyltransferase (366 aa).

It belongs to the GcvT family. As to quaternary structure, the glycine cleavage system is composed of four proteins: P, T, L and H.

The enzyme catalyses N(6)-[(R)-S(8)-aminomethyldihydrolipoyl]-L-lysyl-[protein] + (6S)-5,6,7,8-tetrahydrofolate = N(6)-[(R)-dihydrolipoyl]-L-lysyl-[protein] + (6R)-5,10-methylene-5,6,7,8-tetrahydrofolate + NH4(+). Functionally, the glycine cleavage system catalyzes the degradation of glycine. The protein is Aminomethyltransferase of Bacillus cereus (strain B4264).